Consider the following 491-residue polypeptide: Putative diacyglycerol O-acyltransferase MT2557 (491 aa).

His-145 (proton acceptor) is an active-site residue.

This sequence belongs to the long-chain O-acyltransferase family.

The catalysed reaction is an acyl-CoA + a 1,2-diacyl-sn-glycerol = a triacyl-sn-glycerol + CoA. Its pathway is glycerolipid metabolism; triacylglycerol biosynthesis. The chain is Putative diacyglycerol O-acyltransferase MT2557 from Mycobacterium tuberculosis (strain CDC 1551 / Oshkosh).